The chain runs to 536 residues: Indolin-2-one monooxygenase (536 aa).

A helical membrane pass occupies residues 18 to 34 (GTATHALLLGVLIFLVI). Cys480 contributes to the heme binding site.

Belongs to the cytochrome P450 family. Heme serves as cofactor.

It localises to the membrane. The catalysed reaction is indolin-2-one + reduced [NADPH--hemoprotein reductase] + O2 = 3-hydroxyindolin-2-one + oxidized [NADPH--hemoprotein reductase] + H2O + H(+). Its pathway is secondary metabolite biosynthesis; 2,4-dihydroxy-1,4-benzoxazin-3-one biosynthesis; 2,4-dihydroxy-1,4-benzoxazin-3-one from indoleglycerol phosphate: step 3/5. Catalyzes the conversion of indolin-2-one to 3-hydroxyindolin-2-one. The chain is Indolin-2-one monooxygenase (CYP71C2) from Zea mays (Maize).